Here is a 415-residue protein sequence, read N- to C-terminus: 3-isopropylmalate dehydratase large subunit (415 aa).

[4Fe-4S] cluster is bound by residues C297, C355, and C358.

The protein belongs to the aconitase/IPM isomerase family. LeuC type 2 subfamily. In terms of assembly, heterodimer of LeuC and LeuD. The cofactor is [4Fe-4S] cluster.

It carries out the reaction (2R,3S)-3-isopropylmalate = (2S)-2-isopropylmalate. Its pathway is amino-acid biosynthesis; L-leucine biosynthesis; L-leucine from 3-methyl-2-oxobutanoate: step 2/4. Its function is as follows. Catalyzes the isomerization between 2-isopropylmalate and 3-isopropylmalate, via the formation of 2-isopropylmaleate. The sequence is that of 3-isopropylmalate dehydratase large subunit from Caldivirga maquilingensis (strain ATCC 700844 / DSM 13496 / JCM 10307 / IC-167).